Consider the following 382-residue polypeptide: Galactokinase (382 aa).

34-37 (EHTD) provides a ligand contact to substrate. An ATP-binding site is contributed by 124 to 130 (GAGLSSS). S130 and E162 together coordinate Mg(2+). Residue D174 is the Proton acceptor of the active site. Y223 is a binding site for substrate.

Belongs to the GHMP kinase family. GalK subfamily.

It localises to the cytoplasm. The catalysed reaction is alpha-D-galactose + ATP = alpha-D-galactose 1-phosphate + ADP + H(+). It participates in carbohydrate metabolism; galactose metabolism. In terms of biological role, catalyzes the transfer of the gamma-phosphate of ATP to D-galactose to form alpha-D-galactose-1-phosphate (Gal-1-P). The protein is Galactokinase of Shigella boydii serotype 18 (strain CDC 3083-94 / BS512).